Reading from the N-terminus, the 298-residue chain is Probable mitochondrial 2-oxodicarboxylate carrier (298 aa).

6 helical membrane-spanning segments follow: residues 6–26 (IPFPVTFAAGAVAGISEVLTL), 62–81 (HRLYRGILPPILMEAPKRAL), 105–125 (ALSILTGSCAGFTETFVVVPF), 159–179 (ALYNGFEATMWRHVVWNAGYF), 203–223 (LIAGTIGGIFGTFLSTPFDVI), and 267–287 (VLRLGPGGGILLVVFNSVIEF). 3 Solcar repeats span residues 6–92 (IPFP…YSKL), 102–188 (SSPA…IRNS), and 197–287 (GEIR…VIEF).

The protein belongs to the mitochondrial carrier (TC 2.A.29) family.

Its subcellular location is the mitochondrion inner membrane. Functionally, transports C5-C7 oxodicarboxylates across the inner membranes of mitochondria. This Schizosaccharomyces pombe (strain 972 / ATCC 24843) (Fission yeast) protein is Probable mitochondrial 2-oxodicarboxylate carrier.